A 329-amino-acid chain; its full sequence is Biotin synthase (329 aa).

The region spanning 48 to 278 (FVGDKVYLCS…SKKISVCGGR (231 aa)) is the Radical SAM core domain. Residues Cys-66, Cys-70, and Cys-73 each contribute to the [4Fe-4S] cluster site. Positions 143 and 203 each coordinate [2Fe-2S] cluster.

This sequence belongs to the radical SAM superfamily. Biotin synthase family. As to quaternary structure, homodimer. The cofactor is [4Fe-4S] cluster. [2Fe-2S] cluster serves as cofactor.

The enzyme catalyses (4R,5S)-dethiobiotin + (sulfur carrier)-SH + 2 reduced [2Fe-2S]-[ferredoxin] + 2 S-adenosyl-L-methionine = (sulfur carrier)-H + biotin + 2 5'-deoxyadenosine + 2 L-methionine + 2 oxidized [2Fe-2S]-[ferredoxin]. It functions in the pathway cofactor biosynthesis; biotin biosynthesis; biotin from 7,8-diaminononanoate: step 2/2. Its function is as follows. Catalyzes the conversion of dethiobiotin (DTB) to biotin by the insertion of a sulfur atom into dethiobiotin via a radical-based mechanism. The chain is Biotin synthase from Geotalea uraniireducens (strain Rf4) (Geobacter uraniireducens).